A 479-amino-acid chain; its full sequence is ATP synthase subunit beta, chloroplastic (479 aa).

156–163 (GGAGVGKT) is a binding site for ATP.

It belongs to the ATPase alpha/beta chains family. As to quaternary structure, F-type ATPases have 2 components, CF(1) - the catalytic core - and CF(0) - the membrane proton channel. CF(1) has five subunits: alpha(3), beta(3), gamma(1), delta(1), epsilon(1). CF(0) has four main subunits: a(1), b(1), b'(1) and c(9-12).

Its subcellular location is the plastid. It localises to the chloroplast thylakoid membrane. The enzyme catalyses ATP + H2O + 4 H(+)(in) = ADP + phosphate + 5 H(+)(out). Functionally, produces ATP from ADP in the presence of a proton gradient across the membrane. The catalytic sites are hosted primarily by the beta subunits. This chain is ATP synthase subunit beta, chloroplastic, found in Trichomanes davallioides (Kilau fern).